A 198-amino-acid chain; its full sequence is Nucleoid occlusion factor SlmA (198 aa).

Residues 9 to 70 (RNRREEILQA…SLIEFIEDSL (62 aa)) form the HTH tetR-type domain. The segment at residues 33 to 52 (TTAKLAANVGVSEAALYRHF) is a DNA-binding region (H-T-H motif). Positions 117-144 (EQDRLQGRINQLFERIEAQLRQVLKERK) form a coiled coil.

It belongs to the nucleoid occlusion factor SlmA family. In terms of assembly, homodimer. Interacts with FtsZ.

The protein localises to the cytoplasm. It localises to the nucleoid. In terms of biological role, required for nucleoid occlusion (NO) phenomenon, which prevents Z-ring formation and cell division over the nucleoid. Acts as a DNA-associated cell division inhibitor that binds simultaneously chromosomal DNA and FtsZ, and disrupts the assembly of FtsZ polymers. SlmA-DNA-binding sequences (SBS) are dispersed on non-Ter regions of the chromosome, preventing FtsZ polymerization at these regions. In Serratia proteamaculans (strain 568), this protein is Nucleoid occlusion factor SlmA.